A 568-amino-acid polypeptide reads, in one-letter code: O-fucosyltransferase 9 (568 aa).

The segment covering 1–19 has biased composition (low complexity); sequence MHGLSRLGNGSSNGRINIP. Residues 1–33 are disordered; that stretch reads MHGLSRLGNGSSNGRINIPSPSPPSSPRIRHTR. Residues 65–85 form a helical; Signal-anchor for type II membrane protein membrane-spanning segment; that stretch reads LLLAPLLYIAGMLLFMGSFGF. Asn-125, Asn-151, Asn-189, and Asn-243 each carry an N-linked (GlcNAc...) asparagine glycan. 336-338 provides a ligand contact to substrate; the sequence is HLR. 2 N-linked (GlcNAc...) asparagine glycosylation sites follow: Asn-408 and Asn-409.

The protein belongs to the glycosyltransferase GT106 family.

The protein localises to the membrane. It participates in glycan metabolism. This is O-fucosyltransferase 9 from Arabidopsis thaliana (Mouse-ear cress).